A 216-amino-acid polypeptide reads, in one-letter code: Ras-related protein RABA1c (216 aa).

Position 20–27 (20–27 (GDSGVGKS)) interacts with GTP. Positions 42–50 (SKSTIGVEF) match the Effector region motif. Residues 68-72 (DTAGQ), 126-129 (NKSD), and 156-157 (SA) contribute to the GTP site. S-geranylgeranyl cysteine attachment occurs at residues C213 and C214.

Belongs to the small GTPase superfamily. Rab family.

The protein resides in the cell membrane. Functionally, intracellular vesicle trafficking and protein transport. This Arabidopsis thaliana (Mouse-ear cress) protein is Ras-related protein RABA1c (RABA1C).